A 643-amino-acid chain; its full sequence is Major core protein OPG129 (643 aa).

The propeptide occupies 1 to 61 (MEAVVNSDVF…IVDDDFISAG (61 aa)).

The protein belongs to the orthopoxvirus OPG129 family. The 73-kDa precursor is cleaved to a mature protein of 60 kDa during virion maturation. Proteolytic cleavage of major core proteins OPG129, OPG136, and OPG098, which occurs at a late stage of core formation, is required for production of infectious mature virions (MV).

The protein localises to the virion. In terms of biological role, major component of the virion core that undergoes proteolytic processing during the immature virion (IV) to mature virion (MV) transition. Essential for the formation of a structurally normal core. In Vaccinia virus (strain Western Reserve) (VACV), this protein is Major core protein OPG129 (OPG129).